A 274-amino-acid polypeptide reads, in one-letter code: Cell division protein FtsQ (274 aa).

A disordered region spans residues 1-24 (MRDLHAKKQRVPHNRVKKPPKERK). At 1-33 (MRDLHAKKQRVPHNRVKKPPKERKPINWGPILK) the chain is on the cytoplasmic side. Positions 7-21 (KKQRVPHNRVKKPPK) are enriched in basic residues. A helical membrane pass occupies residues 34-56 (FASRGFGGAALCAGLGFGGWQLY). Topologically, residues 57 to 274 (NLVSRTTLLR…YADKIIVKKV (218 aa)) are periplasmic. The region spanning 65 to 133 (LRLEAIEVSP…HTLSITVSER (69 aa)) is the POTRA domain.

It belongs to the FtsQ/DivIB family. FtsQ subfamily.

The protein localises to the cell inner membrane. Functionally, essential cell division protein. This chain is Cell division protein FtsQ, found in Geobacter sp. (strain M21).